A 119-amino-acid polypeptide reads, in one-letter code: Large ribosomal subunit protein bL17 (119 aa).

The protein belongs to the bacterial ribosomal protein bL17 family. In terms of assembly, part of the 50S ribosomal subunit. Contacts protein L32.

The protein is Large ribosomal subunit protein bL17 of Psychrobacter sp. (strain PRwf-1).